A 391-amino-acid polypeptide reads, in one-letter code: MKKFALIVGIVALAIFSFLYIQLYRVQSAINEQLAQQNIAVQSINLSLFSPALSLENIKTTQFSAQKIEAKFSFLPLLYGNAALHSLNIQQLKLTQNTQNPANVSIEISPFSLKQLLSKKVILNGENHIRIEFNKPIYGKTKTFHFSFHKANLDFSTSESTPLQFVDASLNNQPIGYIETHTAHQQIVTYIKPQCDNDCLAVLKYQQIDNQSAVNFSGKYFPVQRLFALLNLPEMLSGHADFDLDFSFSSSSLIQGKLNFLAQNGEILGVNLLDMVAQYFPINYNNDLLQNKELNTRFEQFYLQLFLQQNQLIAEKIELKTPALLGQGKGIIDLNRMECNVDINLNSTDQRYQNLTLPINFFGNCNSPQYKINFTKKFRHQLIDAIKEKLR.

Residues 4–24 (FALIVGIVALAIFSFLYIQLY) form a helical membrane-spanning segment.

It localises to the membrane. This is an uncharacterized protein from Haemophilus influenzae (strain ATCC 51907 / DSM 11121 / KW20 / Rd).